The primary structure comprises 377 residues: Ferric enterobactin transport protein FepE (377 aa).

At 1 to 41 the chain is on the cytoplasmic side; sequence MSSLNIKQGSDAHFPDYPLASPSNNEIDLLNLISVLWRAKK. Residues 42-62 form a helical membrane-spanning segment; that stretch reads TVMAVVFAFACAGLLISFILP. Over 63–338 the chain is Periplasmic; it reads QKWTSAAVVT…LPVKKDGPGK (276 aa). Residues 339-359 traverse the membrane as a helical segment; the sequence is AIIVILSALIGGMVACGGVLL. At 360 to 377 the chain is on the cytoplasmic side; the sequence is RYAMASRKQDAMMADHLV.

It belongs to the WzzB/Cld/Rol family.

The protein resides in the cell inner membrane. Functionally, part of the ferric enterobactin transport system. This is Ferric enterobactin transport protein FepE (fepE) from Escherichia coli (strain K12).